Consider the following 299-residue polypeptide: ATP phosphoribosyltransferase (299 aa).

The protein belongs to the ATP phosphoribosyltransferase family. Long subfamily. In terms of assembly, equilibrium between an active dimeric form, an inactive hexameric form and higher aggregates. Interconversion between the various forms is largely reversible and is influenced by the natural substrates and inhibitors of the enzyme. Mg(2+) serves as cofactor.

It is found in the cytoplasm. It carries out the reaction 1-(5-phospho-beta-D-ribosyl)-ATP + diphosphate = 5-phospho-alpha-D-ribose 1-diphosphate + ATP. It participates in amino-acid biosynthesis; L-histidine biosynthesis; L-histidine from 5-phospho-alpha-D-ribose 1-diphosphate: step 1/9. Feedback inhibited by histidine. Catalyzes the condensation of ATP and 5-phosphoribose 1-diphosphate to form N'-(5'-phosphoribosyl)-ATP (PR-ATP). Has a crucial role in the pathway because the rate of histidine biosynthesis seems to be controlled primarily by regulation of HisG enzymatic activity. This Edwardsiella ictaluri (strain 93-146) protein is ATP phosphoribosyltransferase.